The chain runs to 628 residues: 69 kDa protein (628 aa).

Disordered regions lie at residues 1-25 (MSNG…SAPD), 141-332 (HFHA…FRPS), 346-404 (LGHL…LLPN), 418-493 (RGKI…DPVL), and 535-628 (QTVL…PDTD). The segment covering 299-312 (PPTTTSRPTGPPSR) has biased composition (low complexity). The span at 320-331 (YQSSPHTPNFRP) shows a compositional bias: polar residues. A compositionally biased stretch (pro residues) spans 434 to 450 (GAPPPPRRLPSPAPRPQ).

The protein belongs to the tymoviridae protein p69 family.

In terms of biological role, acts as a suppressor of RNA-mediated gene silencing, also known as post-transcriptional gene silencing (PTGS), a mechanism of plant viral defense that limits the accumulation of viral RNAs. The polypeptide is 69 kDa protein (Brassica (Chinese cabbage)).